A 649-amino-acid chain; its full sequence is Threonine--tRNA ligase (649 aa).

One can recognise a TGS domain in the interval 1–60 (MHVTLPDGKQLDLQAGATALDVARALGPRLAQDALAALVNGELMDLMTPLPEGAQVRLIT). The segment at 248–544 (DHRKLGRELE…LIEHYGGDFP (297 aa)) is catalytic. 3 residues coordinate Zn(2+): Cys-341, His-392, and His-521.

The protein belongs to the class-II aminoacyl-tRNA synthetase family. Homodimer. It depends on Zn(2+) as a cofactor.

The protein resides in the cytoplasm. The enzyme catalyses tRNA(Thr) + L-threonine + ATP = L-threonyl-tRNA(Thr) + AMP + diphosphate + H(+). Functionally, catalyzes the attachment of threonine to tRNA(Thr) in a two-step reaction: L-threonine is first activated by ATP to form Thr-AMP and then transferred to the acceptor end of tRNA(Thr). Also edits incorrectly charged L-seryl-tRNA(Thr). This Deinococcus geothermalis (strain DSM 11300 / CIP 105573 / AG-3a) protein is Threonine--tRNA ligase.